The sequence spans 49 residues: DNA-directed RNA polymerase subunit Rpo12 (49 aa).

Cys11, Cys27, and Cys30 together coordinate Zn(2+).

This sequence belongs to the archaeal Rpo12/eukaryotic RPC10 RNA polymerase subunit family. Part of the RNA polymerase complex. It depends on Zn(2+) as a cofactor.

The protein resides in the cytoplasm. The catalysed reaction is RNA(n) + a ribonucleoside 5'-triphosphate = RNA(n+1) + diphosphate. DNA-dependent RNA polymerase (RNAP) catalyzes the transcription of DNA into RNA using the four ribonucleoside triphosphates as substrates. The polypeptide is DNA-directed RNA polymerase subunit Rpo12 (Pyrococcus abyssi (strain GE5 / Orsay)).